The chain runs to 370 residues: MDLRKSPLYSKYIESNAKLVDFAGWEMPISFSGLIKEHESVRSSAGLFDISHMGVISVKGINPKDYIQKFFPTNLYSFSEGQGLYTVMLNDKGGIIDDLIIYDLGIQENDITELLLIVNASRYEEDFQWIKNNLNKDEISITNFKKAKVLLALQGKKSFDLFEEWIDSSISHIPNFGCEYKIFEHISPKEKIFFSKTGYTGENGLEILLSKKAAINLWDFSISKNVAPCGLGARDTLRLEAGMHLYGQDINEETSPYEAGLGWLVHLENNHEFFGRRFLEEQSRLGIQKKLVGLFIEGKAIGRKGCTVLKGEENIGTITSGSWSPTKQQAIAFAYINTSHALINNEVQVLIRGKKFKGVITKRAFYKKNY.

Belongs to the GcvT family. In terms of assembly, the glycine cleavage system is composed of four proteins: P, T, L and H.

The enzyme catalyses N(6)-[(R)-S(8)-aminomethyldihydrolipoyl]-L-lysyl-[protein] + (6S)-5,6,7,8-tetrahydrofolate = N(6)-[(R)-dihydrolipoyl]-L-lysyl-[protein] + (6R)-5,10-methylene-5,6,7,8-tetrahydrofolate + NH4(+). Its function is as follows. The glycine cleavage system catalyzes the degradation of glycine. In Prochlorococcus marinus (strain MIT 9301), this protein is Aminomethyltransferase.